The primary structure comprises 299 residues: Acetylglutamate kinase (299 aa).

Substrate contacts are provided by residues 72-73 (GG), R94, and N196.

Belongs to the acetylglutamate kinase family. ArgB subfamily.

It localises to the cytoplasm. It carries out the reaction N-acetyl-L-glutamate + ATP = N-acetyl-L-glutamyl 5-phosphate + ADP. It functions in the pathway amino-acid biosynthesis; L-arginine biosynthesis; N(2)-acetyl-L-ornithine from L-glutamate: step 2/4. Functionally, catalyzes the ATP-dependent phosphorylation of N-acetyl-L-glutamate. This is Acetylglutamate kinase from Burkholderia ambifaria (strain MC40-6).